The sequence spans 320 residues: Histidine decarboxylase proenzyme (320 aa).

Residues 2–11 (NKNLEANRNR) constitute a propeptide that is removed on maturation. Ser-98 carries the post-translational modification Pyruvic acid (Ser). The Proton donor role is filled by Glu-215.

The proenzyme is a hexamer of identical pi chains; each pi chain monomer is cleaved to form a small (or beta) chain and a large (or alpha) chain by non-hydrolytic self-catalysis. It depends on pyruvate as a cofactor.

It carries out the reaction L-histidine + H(+) = histamine + CO2. The sequence is that of Histidine decarboxylase proenzyme (hdc) from Clostridium perfringens (strain ATCC 13124 / DSM 756 / JCM 1290 / NCIMB 6125 / NCTC 8237 / Type A).